A 246-amino-acid polypeptide reads, in one-letter code: 3-deoxy-manno-octulosonate cytidylyltransferase (246 aa).

The protein belongs to the KdsB family.

The protein localises to the cytoplasm. It catalyses the reaction 3-deoxy-alpha-D-manno-oct-2-ulosonate + CTP = CMP-3-deoxy-beta-D-manno-octulosonate + diphosphate. Its pathway is nucleotide-sugar biosynthesis; CMP-3-deoxy-D-manno-octulosonate biosynthesis; CMP-3-deoxy-D-manno-octulosonate from 3-deoxy-D-manno-octulosonate and CTP: step 1/1. The protein operates within bacterial outer membrane biogenesis; lipopolysaccharide biosynthesis. In terms of biological role, activates KDO (a required 8-carbon sugar) for incorporation into bacterial lipopolysaccharide in Gram-negative bacteria. The protein is 3-deoxy-manno-octulosonate cytidylyltransferase of Rickettsia africae (strain ESF-5).